A 105-amino-acid chain; its full sequence is Nitrogen fixation nifHD region glnB-like protein 1 (105 aa).

It belongs to the P(II) protein family.

Functionally, could be involved in the regulation of nitrogen fixation. The polypeptide is Nitrogen fixation nifHD region glnB-like protein 1 (glnBI) (Methanococcus maripaludis (strain DSM 14266 / JCM 13030 / NBRC 101832 / S2 / LL)).